The chain runs to 316 residues: E3 ubiquitin-protein ligase rnf146 (316 aa).

The RING-type zinc-finger motif lies at 36 to 74 (CAICLQTCVHPVSLPCKHIFCYLCVKGASWLGRRCALCR). Residues 91 to 167 (EELKSASRGN…EHGRRRKIKR (77 aa)) form the WWE domain. The a glycoprotein site is built by tyrosine 107, arginine 110, tryptophan 114, tyrosine 144, glutamine 153, arginine 163, and lysine 175. Residues 257 to 316 (GRNNIGEGEEGQPLINARMPAPSALLEESEPSDSNDHGSPTLQHNSLLVPQSNRLPFGNP) form a disordered region. Positions 293–310 (HGSPTLQHNSLLVPQSNR) are enriched in polar residues.

The protein resides in the cytoplasm. Its subcellular location is the cytosol. The protein localises to the nucleus. It carries out the reaction S-ubiquitinyl-[E2 ubiquitin-conjugating enzyme]-L-cysteine + [acceptor protein]-L-lysine = [E2 ubiquitin-conjugating enzyme]-L-cysteine + N(6)-ubiquitinyl-[acceptor protein]-L-lysine.. The protein operates within protein modification; protein ubiquitination. E3 ubiquitin-protein ligase that specifically binds poly-ADP-ribosylated proteins and mediates their ubiquitination and subsequent degradation. May regulate many important biological processes, such as cell survival and DNA damage response. Acts as an activator of the Wnt signaling pathway by mediating the ubiquitination of poly-ADP-ribosylated proteins. Neuroprotective protein. Protects against cell death induced by DNA damaging agents and rescues cells from G1 arrest. Promotes cell survival after gamma-irradiation. Facilitates DNA repair. The polypeptide is E3 ubiquitin-protein ligase rnf146 (rnf146) (Xenopus tropicalis (Western clawed frog)).